Reading from the N-terminus, the 165-residue chain is ATP synthase subunit b (165 aa).

A helical transmembrane segment spans residues 10 to 30 (LIFWMLLSFGIVFAVLAKYGF).

This sequence belongs to the ATPase B chain family. As to quaternary structure, F-type ATPases have 2 components, F(1) - the catalytic core - and F(0) - the membrane proton channel. F(1) has five subunits: alpha(3), beta(3), gamma(1), delta(1), epsilon(1). F(0) has three main subunits: a(1), b(2) and c(10-14). The alpha and beta chains form an alternating ring which encloses part of the gamma chain. F(1) is attached to F(0) by a central stalk formed by the gamma and epsilon chains, while a peripheral stalk is formed by the delta and b chains.

The protein localises to the cell inner membrane. Functionally, f(1)F(0) ATP synthase produces ATP from ADP in the presence of a proton or sodium gradient. F-type ATPases consist of two structural domains, F(1) containing the extramembraneous catalytic core and F(0) containing the membrane proton channel, linked together by a central stalk and a peripheral stalk. During catalysis, ATP synthesis in the catalytic domain of F(1) is coupled via a rotary mechanism of the central stalk subunits to proton translocation. In terms of biological role, component of the F(0) channel, it forms part of the peripheral stalk, linking F(1) to F(0). The polypeptide is ATP synthase subunit b (Bacteroides fragilis (strain ATCC 25285 / DSM 2151 / CCUG 4856 / JCM 11019 / LMG 10263 / NCTC 9343 / Onslow / VPI 2553 / EN-2)).